A 188-amino-acid chain; its full sequence is Putative manganese efflux pump MntP (188 aa).

The next 6 membrane-spanning stretches (helical) occupy residues 3–23 (LYAL…VALA), 35–55 (IAAT…AGWV), 63–83 (FISE…GLKM), 104–126 (WMTV…GLAF), 140–160 (MAAT…GVLF), and 167–187 (AGGL…LGLI).

The protein belongs to the MntP (TC 9.B.29) family.

It localises to the cell inner membrane. Its function is as follows. Probably functions as a manganese efflux pump. The protein is Putative manganese efflux pump MntP of Neisseria gonorrhoeae (strain ATCC 700825 / FA 1090).